We begin with the raw amino-acid sequence, 303 residues long: Tyrosine recombinase XerC (303 aa).

The Core-binding (CB) domain occupies I3–V89. Residues K110–R297 enclose the Tyr recombinase domain. Catalysis depends on residues R150, K174, H249, R252, and H275. The active-site O-(3'-phospho-DNA)-tyrosine intermediate is Y284.

It belongs to the 'phage' integrase family. XerC subfamily. In terms of assembly, forms a cyclic heterotetrameric complex composed of two molecules of XerC and two molecules of XerD.

Its subcellular location is the cytoplasm. Site-specific tyrosine recombinase, which acts by catalyzing the cutting and rejoining of the recombining DNA molecules. The XerC-XerD complex is essential to convert dimers of the bacterial chromosome into monomers to permit their segregation at cell division. It also contributes to the segregational stability of plasmids. This Halalkalibacterium halodurans (strain ATCC BAA-125 / DSM 18197 / FERM 7344 / JCM 9153 / C-125) (Bacillus halodurans) protein is Tyrosine recombinase XerC.